The sequence spans 292 residues: Protein LRATD1 (292 aa).

The residue at position 38 (S38) is a Phosphoserine. Positions 133–228 (PAPEPPAPAP…CRFGKREFKA (96 aa)) constitute an LRAT domain.

The protein belongs to the LRATD family. In terms of tissue distribution, only detected in testis. Highly expressed in colon cancer cells.

Its subcellular location is the cytoplasm. Its function is as follows. May play a role in cell morphology and motility. This is Protein LRATD1 from Homo sapiens (Human).